Here is a 476-residue protein sequence, read N- to C-terminus: MGTTSSQSKTLYQKLYDAHIVHEAPNETPLLYIDRHLVHEVTSPQAFDGLRAMGRPVRQPGKTFATMDHNVSTQTKDINASGEMARIQMQELIKNCAEFGVSLYDLNHPFQGIVHVIGPEQGMTLPGMTIVCGDSHTATHGAFGSLAFGIGTSEVEHVLATQTLKQGRAKTMRIEVNGTVGAGITAKDIVLAIIGKTGSAGGTGHVVEFCGSAIEALSMEGRMTLCNMAIEMGAKAGLVAPDDTTFAYLKGRQFAPTGEQWEQGVAYWRTLKSDADAQFDTIVTLDAADIAPQVTWGTNPGQVIAVNQIIPAPESFSDPVERASAEKALAYMDLRPGIKLTEVAIDKVFIGSCTNSRIEDLRAAAAIAQGRKVAKGVQAIVVPGSGPVKAQAEAEGLDKIFIAAGFEWRLPGCSMCLAMNNDRLEPGERCASTSNRNFEGRQGRGGRTHLVSPAMAAAAAVSGHFADVRELSAATH.

Cys-353, Cys-413, and Cys-416 together coordinate [4Fe-4S] cluster.

This sequence belongs to the aconitase/IPM isomerase family. LeuC type 1 subfamily. In terms of assembly, heterodimer of LeuC and LeuD. [4Fe-4S] cluster is required as a cofactor.

It catalyses the reaction (2R,3S)-3-isopropylmalate = (2S)-2-isopropylmalate. It participates in amino-acid biosynthesis; L-leucine biosynthesis; L-leucine from 3-methyl-2-oxobutanoate: step 2/4. Catalyzes the isomerization between 2-isopropylmalate and 3-isopropylmalate, via the formation of 2-isopropylmaleate. This chain is 3-isopropylmalate dehydratase large subunit, found in Yersinia pseudotuberculosis serotype IB (strain PB1/+).